Consider the following 572-residue polypeptide: METKDIEILIQKFALQNAYKHGSVPQAGAVTGKLLGTHPELRPHAKELMPIVQKVLADIGQMSQDEIKAKLSEIAPELIEELSVKKEVRRGLPPLDTSMLKPGQKVTLRIAPNPNGPPSLGNARGIIVNHEYARMYDGVFIMRFDDTDPSIKKPMIEAYTWYVEHAKWLGCPPDKVVAASDRLPLYYEQAEKLIDLGKAYVCTCDNEVFHDLKEAGKPCPHRETPPAENMEKWKKMLAGGYGGKEAVLRIKTDIAHKDPAMRDWVAFRIVTEPHPKTGTKYMVWPMLDFESAMEDHFLGVTHIIRGKDLMKTADKQKYIYRYLGWEYPHVSHWGRVRLLGFGKFSTSVMKKGIEAGEYRGWDDPQLPTVVALKRRGIEPEAIRNVMINMGVTETDIEFSMDTLYAENRKIVDPKANRYFFVPDPVVLKVNGAPFTTAKAPLHPQDHKRGFREMCVAENPEILIPKSDADNARPGDILRLKDLYNVRITGSDPLTGDYIGNDLSVLKQGAKIVQWVTREGGVPTRVIGPDGEFHGIAECDIRNELNNVVQFERFAFVRIDTINGVVLAYYTHP.

The 'HIGH' region signature appears at 112–122; that stretch reads PNPNGPPSLGN.

Belongs to the class-I aminoacyl-tRNA synthetase family. Glutamate--tRNA ligase type 2 subfamily.

It localises to the cytoplasm. The enzyme catalyses tRNA(Glu) + L-glutamate + ATP = L-glutamyl-tRNA(Glu) + AMP + diphosphate. Catalyzes the attachment of glutamate to tRNA(Glu) in a two-step reaction: glutamate is first activated by ATP to form Glu-AMP and then transferred to the acceptor end of tRNA(Glu). The polypeptide is Glutamate--tRNA ligase (Methanocella arvoryzae (strain DSM 22066 / NBRC 105507 / MRE50)).